The sequence spans 143 residues: Nucleoside diphosphate kinase (143 aa).

Residues lysine 11, phenylalanine 59, arginine 87, threonine 93, arginine 104, and asparagine 114 each contribute to the ATP site. Histidine 117 acts as the Pros-phosphohistidine intermediate in catalysis.

The protein belongs to the NDK family. As to quaternary structure, homotetramer. Requires Mg(2+) as cofactor.

Its subcellular location is the cytoplasm. It catalyses the reaction a 2'-deoxyribonucleoside 5'-diphosphate + ATP = a 2'-deoxyribonucleoside 5'-triphosphate + ADP. It carries out the reaction a ribonucleoside 5'-diphosphate + ATP = a ribonucleoside 5'-triphosphate + ADP. Its function is as follows. Major role in the synthesis of nucleoside triphosphates other than ATP. The ATP gamma phosphate is transferred to the NDP beta phosphate via a ping-pong mechanism, using a phosphorylated active-site intermediate. The sequence is that of Nucleoside diphosphate kinase from Shewanella pealeana (strain ATCC 700345 / ANG-SQ1).